The following is a 343-amino-acid chain: tRNA-specific 2-thiouridylase MnmA 2 (343 aa).

Residues 7–14 (GMSGGVDS) and leucine 33 each bind ATP. Cysteine 91 acts as the Nucleophile in catalysis. An intrachain disulfide couples cysteine 91 to cysteine 189. Glycine 115 serves as a coordination point for ATP. Residues 139–141 (KDQ) are interaction with tRNA. Cysteine 189 functions as the Cysteine persulfide intermediate in the catalytic mechanism.

The protein belongs to the MnmA/TRMU family.

Its subcellular location is the cytoplasm. The catalysed reaction is S-sulfanyl-L-cysteinyl-[protein] + uridine(34) in tRNA + AH2 + ATP = 2-thiouridine(34) in tRNA + L-cysteinyl-[protein] + A + AMP + diphosphate + H(+). In terms of biological role, catalyzes the 2-thiolation of uridine at the wobble position (U34) of tRNA, leading to the formation of s(2)U34. The polypeptide is tRNA-specific 2-thiouridylase MnmA 2 (Fusobacterium nucleatum subsp. nucleatum (strain ATCC 25586 / DSM 15643 / BCRC 10681 / CIP 101130 / JCM 8532 / KCTC 2640 / LMG 13131 / VPI 4355)).